A 139-amino-acid polypeptide reads, in one-letter code: D-ribose pyranase (139 aa).

The active-site Proton donor is H20. Substrate-binding positions include D28, H106, and 128–130 (YAN).

It belongs to the RbsD / FucU family. RbsD subfamily. In terms of assembly, homodecamer.

The protein resides in the cytoplasm. It carries out the reaction beta-D-ribopyranose = beta-D-ribofuranose. The protein operates within carbohydrate metabolism; D-ribose degradation; D-ribose 5-phosphate from beta-D-ribopyranose: step 1/2. Its function is as follows. Catalyzes the interconversion of beta-pyran and beta-furan forms of D-ribose. This chain is D-ribose pyranase, found in Enterobacter sp. (strain 638).